Reading from the N-terminus, the 375-residue chain is UDP-N-acetylglucosamine--N-acetylmuramyl-(pentapeptide) pyrophosphoryl-undecaprenol N-acetylglucosamine transferase (375 aa).

UDP-N-acetyl-alpha-D-glucosamine is bound by residues 13–15, Asn124, Arg165, Ser193, and Gln294; that span reads TGG.

Belongs to the glycosyltransferase 28 family. MurG subfamily.

The protein localises to the cell inner membrane. It catalyses the reaction di-trans,octa-cis-undecaprenyl diphospho-N-acetyl-alpha-D-muramoyl-L-alanyl-D-glutamyl-meso-2,6-diaminopimeloyl-D-alanyl-D-alanine + UDP-N-acetyl-alpha-D-glucosamine = di-trans,octa-cis-undecaprenyl diphospho-[N-acetyl-alpha-D-glucosaminyl-(1-&gt;4)]-N-acetyl-alpha-D-muramoyl-L-alanyl-D-glutamyl-meso-2,6-diaminopimeloyl-D-alanyl-D-alanine + UDP + H(+). It participates in cell wall biogenesis; peptidoglycan biosynthesis. In terms of biological role, cell wall formation. Catalyzes the transfer of a GlcNAc subunit on undecaprenyl-pyrophosphoryl-MurNAc-pentapeptide (lipid intermediate I) to form undecaprenyl-pyrophosphoryl-MurNAc-(pentapeptide)GlcNAc (lipid intermediate II). This Mesorhizobium japonicum (strain LMG 29417 / CECT 9101 / MAFF 303099) (Mesorhizobium loti (strain MAFF 303099)) protein is UDP-N-acetylglucosamine--N-acetylmuramyl-(pentapeptide) pyrophosphoryl-undecaprenol N-acetylglucosamine transferase.